Consider the following 103-residue polypeptide: Carboxysome shell protein CcmK2 (103 aa).

One can recognise a BMC domain in the interval 4–90 (AVGMIETRGF…PHENLEYVLP (87 aa)).

This sequence belongs to the bacterial microcompartments protein family. CcmK subfamily. In terms of assembly, homohexamer, might also make dodecamers. Interacts with full-length CcmM. Forms mixed heterohexamers of all possible stoichiometries with CcmK1, which might form dodecamers. Only very weak interactions with CcmK3 and CcmK4 were seen.

It localises to the carboxysome. Functionally, one of the shell proteins of the carboxysome, a polyhedral inclusion where RuBisCO (ribulose bisphosphate carboxylase, rbcL-rbcS) is sequestered. The central pore probably regulates metabolite flux. Hexamers make sheets that form the facets of the polyhedral carboxysome. This chain is Carboxysome shell protein CcmK2, found in Synechocystis sp. (strain ATCC 27184 / PCC 6803 / Kazusa).